Reading from the N-terminus, the 95-residue chain is Histone-like DNA-binding protein (95 aa).

Belongs to the bacterial histone-like protein family.

The sequence is that of Histone-like DNA-binding protein from Rickettsia rickettsii.